Here is a 154-residue protein sequence, read N- to C-terminus: Large ribosomal subunit protein uL13 (154 aa).

The protein belongs to the universal ribosomal protein uL13 family. Part of the 50S ribosomal subunit.

Functionally, this protein is one of the early assembly proteins of the 50S ribosomal subunit, although it is not seen to bind rRNA by itself. It is important during the early stages of 50S assembly. The sequence is that of Large ribosomal subunit protein uL13 from Bartonella quintana (strain Toulouse) (Rochalimaea quintana).